The following is a 298-amino-acid chain: Tyrosine recombinase XerC (298 aa).

The Core-binding (CB) domain occupies 1–84 (MNHIQEAFLN…TLRTFYEYWM (84 aa)). The region spanning 105-286 (YLPQFFYEEE…SNQQLRKVYL (182 aa)) is the Tyr recombinase domain. Active-site residues include arginine 145, lysine 169, histidine 238, arginine 241, and histidine 264. Tyrosine 273 acts as the O-(3'-phospho-DNA)-tyrosine intermediate in catalysis.

It belongs to the 'phage' integrase family. XerC subfamily. In terms of assembly, forms a cyclic heterotetrameric complex composed of two molecules of XerC and two molecules of XerD.

It localises to the cytoplasm. In terms of biological role, site-specific tyrosine recombinase, which acts by catalyzing the cutting and rejoining of the recombining DNA molecules. The XerC-XerD complex is essential to convert dimers of the bacterial chromosome into monomers to permit their segregation at cell division. It also contributes to the segregational stability of plasmids. In Staphylococcus aureus (strain MSSA476), this protein is Tyrosine recombinase XerC.